Reading from the N-terminus, the 62-residue chain is Photosystem II reaction center protein Z (62 aa).

2 consecutive transmembrane segments (helical) span residues 8–28 (AIFALIATSSILLISVPVVFA) and 41–61 (FSGTSLWIGLVFLVGILNSLI).

This sequence belongs to the PsbZ family. As to quaternary structure, PSII is composed of 1 copy each of membrane proteins PsbA, PsbB, PsbC, PsbD, PsbE, PsbF, PsbH, PsbI, PsbJ, PsbK, PsbL, PsbM, PsbT, PsbY, PsbZ, Psb30/Ycf12, at least 3 peripheral proteins of the oxygen-evolving complex and a large number of cofactors. It forms dimeric complexes.

The protein resides in the plastid. Its subcellular location is the chloroplast thylakoid membrane. Functionally, may control the interaction of photosystem II (PSII) cores with the light-harvesting antenna, regulates electron flow through the 2 photosystem reaction centers. PSII is a light-driven water plastoquinone oxidoreductase, using light energy to abstract electrons from H(2)O, generating a proton gradient subsequently used for ATP formation. This is Photosystem II reaction center protein Z from Acorus gramineus (Dwarf sweet flag).